Reading from the N-terminus, the 362-residue chain is Sphingosine 1-phosphate receptor 1 (362 aa).

Topologically, residues 1–25 (MDDLIARHYNFTGKFRKVHKDPGLK) are extracellular. Asn-10 carries N-linked (GlcNAc...) asparagine glycosylation. Residues 26-47 (ADSVVFIIVCCFIILENVLVLL) traverse the membrane as a helical segment. Over 48–61 (TIWRTKKFHKPMYY) the chain is Cytoplasmic. A helical membrane pass occupies residues 62–83 (FIGNLALSDLLAGVVYTANILL). Topologically, residues 84 to 95 (SGANTYKLTPTQ) are extracellular. A helical transmembrane segment spans residues 96–117 (WFFREGSMFVALAASVFSLLAI). 99 to 100 (RE) contributes to the sphing-4-enine 1-phosphate binding site. The Cytoplasmic segment spans residues 118-139 (AIERHLTMLKMKLHNNGKTCRV). A helical transmembrane segment spans residues 140–161 (FMLISTVWFIAAILGGLPVMGW). Topologically, residues 162–175 (NCIDSMNNCSTVLP) are extracellular. Cys-163 and Cys-170 are disulfide-bonded. A glycan (N-linked (GlcNAc...) asparagine) is linked at Asn-169. Residues 176-203 (LYHKAYILFCTTVFSVILMAIVILYARI) form a helical membrane-spanning segment. Residues 204–238 (YALVRTRSRKLVFRKVANGRGSNKSSEKSMALLKT) lie on the Cytoplasmic side of the membrane. The chain crosses the membrane as a helical span at residues 239–259 (VIIVLSCFIACWAPLFILLLL). Residue 246 to 250 (FIACW) participates in sphing-4-enine 1-phosphate binding. The Extracellular portion of the chain corresponds to 260–270 (DVACQTLTCSI). Cys-263 and Cys-268 are joined by a disulfide. The chain crosses the membrane as a helical span at residues 271–291 (LYKAEWFLALAVLNSAMNPLI). The Cytoplasmic portion of the chain corresponds to 292-362 (YTLTSNEMRR…VSSGNITSSS (71 aa)). Cys-309 carries S-palmitoyl cysteine lipidation. The tract at residues 328–362 (FSRSKSDNSSHPNKDEPEYSPRETIVSSGNITSSS) is disordered. The span at 329 to 348 (SRSKSDNSSHPNKDEPEYSP) shows a compositional bias: basic and acidic residues. The span at 352-362 (IVSSGNITSSS) shows a compositional bias: polar residues.

The protein belongs to the G-protein coupled receptor 1 family.

It localises to the cell membrane. G-protein coupled receptor for the bioactive lysosphingolipid sphingosine 1-phosphate (S1P) that seems to be coupled to the G(i) subclass of heteromeric G proteins. Signaling leads to the activation of RAC1, SRC, PTK2/FAK1 and MAP kinases. Plays an important role in cell migration, probably via its role in the reorganization of the actin cytoskeleton and the formation of lamellipodia in response to stimuli that increase the activity of the sphingosine kinase SPHK1. Required for normal chemotaxis toward sphingosine 1-phosphate. This chain is Sphingosine 1-phosphate receptor 1 (s1pr1), found in Danio rerio (Zebrafish).